We begin with the raw amino-acid sequence, 379 residues long: Cytochrome b (379 aa).

A run of 4 helical transmembrane segments spans residues 33–53 (FGSL…FLAM), 77–98 (WLIR…YLHI), 113–133 (WNIG…GYVL), and 178–198 (FFAF…IHLL). 2 residues coordinate heme b: His-83 and His-97. Residues His-182 and His-196 each coordinate heme b. His-201 lines the a ubiquinone pocket. The next 4 membrane-spanning stretches (helical) occupy residues 226–246 (YKDL…ALFY), 288–308 (LGGV…PILH), 320–340 (ASQL…WIGG), and 347–367 (YIII…VLNP).

This sequence belongs to the cytochrome b family. As to quaternary structure, the cytochrome bc1 complex contains 3 respiratory subunits (MT-CYB, CYC1 and UQCRFS1), 2 core proteins (UQCRC1 and UQCRC2) and probably 6 low-molecular weight proteins. It depends on heme b as a cofactor.

It is found in the mitochondrion inner membrane. Its function is as follows. Component of the ubiquinol-cytochrome c reductase complex (complex III or cytochrome b-c1 complex) that is part of the mitochondrial respiratory chain. The b-c1 complex mediates electron transfer from ubiquinol to cytochrome c. Contributes to the generation of a proton gradient across the mitochondrial membrane that is then used for ATP synthesis. The chain is Cytochrome b (mt-cyb) from Anguilla reinhardtii (Speckled longfin eel).